The chain runs to 111 residues: SPbeta prophage-derived uncharacterized protein YolC (111 aa).

Residues 1–25 (MKKRLIGFLVLVPALIMSGITLIEA) form the signal peptide.

In Bacillus subtilis (strain 168), this protein is SPbeta prophage-derived uncharacterized protein YolC (yolC).